We begin with the raw amino-acid sequence, 238 residues long: DNA repair protein RecO (238 aa).

Belongs to the RecO family.

In terms of biological role, involved in DNA repair and RecF pathway recombination. The sequence is that of DNA repair protein RecO from Anaplasma marginale (strain Florida).